We begin with the raw amino-acid sequence, 101 residues long: Enhancer of yellow 2 transcription factor (101 aa).

This sequence belongs to the ENY2 family. In terms of assembly, component of the nuclear pore complex (NPC)-associated AMEX complex (anchoring and mRNA export complex), composed of at least e(y)2 and xmas-2. Component of the SAGA transcription coactivator-HAT complexes, at least composed of Ada2b, e(y)2, Pcaf/Gcn5, Taf10 and Nipped-A/Trrap. Within the SAGA complex, e(y)2, Sgf11, and not/nonstop form an additional subcomplex of SAGA called the DUB module (deubiquitination module). Component of the THO complex, composed of at least e(y)2, HPR1, THO2, THOC5, THOC6 and THOC7. Interacts with e(y)1. Interacts with su(Hw) (via zinc fingers). Interacts with xmas-2; required for localization to the nuclear periphery. Interacts with the nuclear pore complex (NPC).

It localises to the nucleus. The protein resides in the nucleoplasm. Its subcellular location is the cytoplasm. Functionally, involved in mRNA export coupled transcription activation by association with both the AMEX and the SAGA complexes. The SAGA complex is a multiprotein complex that activates transcription by remodeling chromatin and mediating histone acetylation and deubiquitination. Within the SAGA complex, participates in a subcomplex that specifically deubiquitinates histone H2B. The SAGA complex is recruited to specific gene promoters by activators, where it is required for transcription. Required for nuclear receptor-mediated transactivation. Involved in transcription elongation by recruiting the THO complex onto nascent mRNA. The AMEX complex functions in docking export-competent ribonucleoprotein particles (mRNPs) to the nuclear entrance of the nuclear pore complex (nuclear basket). AMEX participates in mRNA export and accurate chromatin positioning in the nucleus by tethering genes to the nuclear periphery. This is Enhancer of yellow 2 transcription factor from Drosophila erecta (Fruit fly).